We begin with the raw amino-acid sequence, 246 residues long: MASVSSKIFAITGGASGIGAATCRLLAKRGAATLCVGDLCSENMKQLENDIKEINPNTKVHCTVLDVSSSSNVDEWIKDIITTFGDLHGAANIAGIAQGAGLRQAPTILEEDDQQWKKVFQVNLDGVLYSTRAQVRAMKESSSTNPGDRSIVNVASIASMSHMPDVFAYGTSKAGCAYFTTCVSQDVMPFGIRANTVSPEEVEETYKKEGFSVIEADDVARTIVWLLSEDSRPVFGANINVGACMP.

A signal peptide spans 1–20 (MASVSSKIFAITGGASGIGA). Residues Ile18, Asp66, Arg132, Tyr169, and Lys173 each contribute to the NADP(+) site. The active-site Proton donor is Tyr169. Catalysis depends on Lys173, which acts as the Lowers pKa of active site Tyr.

This sequence belongs to the short-chain dehydrogenases/reductases (SDR) family. As to quaternary structure, homotetramer.

It carries out the reaction chanoclavine-I + NAD(+) = chanoclavine-I aldehyde + NADH + H(+). It functions in the pathway alkaloid biosynthesis; ergot alkaloid biosynthesis. In terms of biological role, chanoclavine-I dehydrogenase; part of the gene cluster that mediates the biosynthesis of fungal ergot alkaloid. DmaW catalyzes the first step of ergot alkaloid biosynthesis by condensing dimethylallyl diphosphate (DMAP) and tryptophan to form 4-dimethylallyl-L-tryptophan. The second step is catalyzed by the methyltransferase easF that methylates 4-dimethylallyl-L-tryptophan in the presence of S-adenosyl-L-methionine, resulting in the formation of 4-dimethylallyl-L-abrine. The catalase easC and the FAD-dependent oxidoreductase easE then transform 4-dimethylallyl-L-abrine to chanoclavine-I which is further oxidized by easD in the presence of NAD(+), resulting in the formation of chanoclavine-I aldehyde. Chanoclavine-I aldehyde is the precursor of ergoamides and ergopeptines in Clavicipitaceae, and clavine-type alcaloids such as fumiclavine in Trichocomaceae. However, the metabolites downstream of chanoclavine-I aldehyde in Arthrodermataceae have not been identified yet. This is Chanoclavine-I dehydrogenase easD from Arthroderma benhamiae (strain ATCC MYA-4681 / CBS 112371) (Trichophyton mentagrophytes).